Consider the following 200-residue polypeptide: Ras-related protein RABF2b (200 aa).

17–25 lines the GTP pocket; the sequence is GDVGAGKSS. Residues 39-47 carry the Effector region motif; the sequence is QESTIGAAF. GTP-binding positions include 65–69, 123–126, and 153–154; these read DTAGQ, NKSD, and SA. 2 S-geranylgeranyl cysteine lipidation sites follow: C198 and C199.

This sequence belongs to the small GTPase superfamily. Rab family. Interacts with VPS9A homodimer. Interacts with TCTP1. Interacts with MON1. Interacts with EREX (via PX domain). Binds to VPS3. Expressed in roots and actively dividing cells.

It localises to the early endosome membrane. The protein resides in the endosome membrane. It is found in the prevacuolar compartment membrane. The protein localises to the endosome. Its subcellular location is the multivesicular body membrane. It localises to the cell membrane. The protein resides in the cytoplasm. Its activity is regulated as follows. Regulated by guanine nucleotide exchange factors (GEFs) which promote the exchange of bound GDP for free GTP. Functionally, endosomal protein that may be involved in endocytosis. Involved in the trafficking of proteins from prevacuolar compartments (PVCs) to vacuoles. May activate the MON1-CCZ1 complex which acts as guanine nucleotide exchange factors (GEF) for Rab7 protein family, and serves as a link between Rab5 and Rab7 families in PVCs, and mediates PVC maturation. Involved in vacuolar transport of storage proteins with EREX as effector. Regulates membrane trafficking to protein storage vacuoles (PSVs). This Arabidopsis thaliana (Mouse-ear cress) protein is Ras-related protein RABF2b.